The primary structure comprises 122 residues: S-adenosylmethionine decarboxylase proenzyme (122 aa).

The active-site Schiff-base intermediate with substrate; via pyruvic acid is S69. S69 is modified (pyruvic acid (Ser); by autocatalysis). H74 (proton acceptor; for processing activity) is an active-site residue. The active-site Proton donor; for catalytic activity is the C89.

It belongs to the prokaryotic AdoMetDC family. Type 1 subfamily. In terms of assembly, heterotetramer of two alpha and two beta chains arranged as a dimer of alpha/beta heterodimers. The cofactor is pyruvate. In terms of processing, is synthesized initially as an inactive proenzyme. Formation of the active enzyme involves a self-maturation process in which the active site pyruvoyl group is generated from an internal serine residue via an autocatalytic post-translational modification. Two non-identical subunits are generated from the proenzyme in this reaction, and the pyruvate is formed at the N-terminus of the alpha chain, which is derived from the carboxyl end of the proenzyme. The post-translation cleavage follows an unusual pathway, termed non-hydrolytic serinolysis, in which the side chain hydroxyl group of the serine supplies its oxygen atom to form the C-terminus of the beta chain, while the remainder of the serine residue undergoes an oxidative deamination to produce ammonia and the pyruvoyl group blocking the N-terminus of the alpha chain.

It carries out the reaction S-adenosyl-L-methionine + H(+) = S-adenosyl 3-(methylsulfanyl)propylamine + CO2. Its pathway is amine and polyamine biosynthesis; S-adenosylmethioninamine biosynthesis; S-adenosylmethioninamine from S-adenosyl-L-methionine: step 1/1. Catalyzes the decarboxylation of S-adenosylmethionine to S-adenosylmethioninamine (dcAdoMet), the propylamine donor required for the synthesis of the polyamines spermine and spermidine from the diamine putrescine. This chain is S-adenosylmethionine decarboxylase proenzyme, found in Sulfolobus acidocaldarius (strain ATCC 33909 / DSM 639 / JCM 8929 / NBRC 15157 / NCIMB 11770).